The chain runs to 391 residues: 3-ketoacyl-CoA thiolase (391 aa).

The active-site Acyl-thioester intermediate is the Cys-95. Active-site proton acceptor residues include His-347 and Cys-377.

The protein belongs to the thiolase-like superfamily. Thiolase family. As to quaternary structure, heterotetramer of two alpha chains (FadB) and two beta chains (FadA).

It localises to the cytoplasm. It carries out the reaction an acyl-CoA + acetyl-CoA = a 3-oxoacyl-CoA + CoA. Its pathway is lipid metabolism; fatty acid beta-oxidation. Catalyzes the final step of fatty acid oxidation in which acetyl-CoA is released and the CoA ester of a fatty acid two carbons shorter is formed. The polypeptide is 3-ketoacyl-CoA thiolase (Pseudomonas syringae pv. tomato (strain ATCC BAA-871 / DC3000)).